Reading from the N-terminus, the 295-residue chain is Pyridoxal 5'-phosphate synthase subunit PdxS (295 aa).

D25 contributes to the D-ribose 5-phosphate binding site. K82 acts as the Schiff-base intermediate with D-ribose 5-phosphate in catalysis. A D-ribose 5-phosphate-binding site is contributed by G154. R166 lines the D-glyceraldehyde 3-phosphate pocket. D-ribose 5-phosphate-binding positions include G215 and 236–237 (GS).

This sequence belongs to the PdxS/SNZ family. As to quaternary structure, in the presence of PdxT, forms a dodecamer of heterodimers.

It carries out the reaction aldehydo-D-ribose 5-phosphate + D-glyceraldehyde 3-phosphate + L-glutamine = pyridoxal 5'-phosphate + L-glutamate + phosphate + 3 H2O + H(+). It participates in cofactor biosynthesis; pyridoxal 5'-phosphate biosynthesis. Functionally, catalyzes the formation of pyridoxal 5'-phosphate from ribose 5-phosphate (RBP), glyceraldehyde 3-phosphate (G3P) and ammonia. The ammonia is provided by the PdxT subunit. Can also use ribulose 5-phosphate and dihydroxyacetone phosphate as substrates, resulting from enzyme-catalyzed isomerization of RBP and G3P, respectively. This is Pyridoxal 5'-phosphate synthase subunit PdxS from Bacillus cereus (strain 03BB102).